Here is an 834-residue protein sequence, read N- to C-terminus: Protein ROOT HAIR DEFECTIVE 3 homolog 2 (834 aa).

Residues 1–683 (MGENDDGCST…EAHKRNNNWL (683 aa)) are Cytoplasmic-facing. The GB1/RHD3-type G domain maps to 37-252 (GLSYAVVAIM…ISPGGLAGDR (216 aa)). 47 to 54 (GPQSSGKS) lines the GTP pocket. Residues 214–241 (MIVALSSYEEKEKQFEQEVAELRQRFFH) adopt a coiled-coil conformation. A helical membrane pass occupies residues 684–704 (PPAWAIVLMIVLGFNEFMMLL). The Lumenal segment spans residues 705–707 (KNP). A helical membrane pass occupies residues 708 to 728 (LYLLGFFVAFLLSKALWVQLD). Topologically, residues 729–834 (IPREFQHGAV…NVQESEISQM (106 aa)) are cytoplasmic. A compositionally biased stretch (polar residues) spans 767–783 (TTQEVPDLSASQTYRQQ). The interval 767–834 (TTQEVPDLSA…NVQESEISQM (68 aa)) is disordered. Residues 784 to 803 (SPSHSISSTISESVASNISS) show a composition bias toward low complexity. Residues 823–834 (TNNVQESEISQM) are compositionally biased toward polar residues.

It belongs to the TRAFAC class dynamin-like GTPase superfamily. GB1/RHD3 GTPase family. RHD3 subfamily. Expressed in roots, leaves, stems and flowers.

Its subcellular location is the endoplasmic reticulum membrane. Its function is as follows. Probable GTP-binding protein that may be involved in cell development. In Arabidopsis thaliana (Mouse-ear cress), this protein is Protein ROOT HAIR DEFECTIVE 3 homolog 2.